The chain runs to 463 residues: L-seryl-tRNA(Sec) selenium transferase (463 aa).

K295 is subject to N6-(pyridoxal phosphate)lysine.

It belongs to the SelA family. Homodecamer; pentamer of dimers. Binds only one seryl-tRNA(Sec) per dimer. It depends on pyridoxal 5'-phosphate as a cofactor.

It localises to the cytoplasm. It carries out the reaction L-seryl-tRNA(Sec) + selenophosphate + H(+) = L-selenocysteinyl-tRNA(Sec) + phosphate. The protein operates within aminoacyl-tRNA biosynthesis; selenocysteinyl-tRNA(Sec) biosynthesis; selenocysteinyl-tRNA(Sec) from L-seryl-tRNA(Sec) (bacterial route): step 1/1. Functionally, converts seryl-tRNA(Sec) to selenocysteinyl-tRNA(Sec) required for selenoprotein biosynthesis. This is L-seryl-tRNA(Sec) selenium transferase from Salmonella paratyphi B (strain ATCC BAA-1250 / SPB7).